The following is a 449-amino-acid chain: Phosphoglucosamine mutase (449 aa).

Ser103 (phosphoserine intermediate) is an active-site residue. Positions 103, 240, 242, and 244 each coordinate Mg(2+). Phosphoserine is present on Ser103.

This sequence belongs to the phosphohexose mutase family. Mg(2+) is required as a cofactor. In terms of processing, activated by phosphorylation.

The enzyme catalyses alpha-D-glucosamine 1-phosphate = D-glucosamine 6-phosphate. In terms of biological role, catalyzes the conversion of glucosamine-6-phosphate to glucosamine-1-phosphate. The chain is Phosphoglucosamine mutase from Thermobifida fusca (strain YX).